The primary structure comprises 450 residues: Signal recognition particle protein (450 aa).

GTP contacts are provided by residues 107–114 (GLQGVGKT), 190–194 (DTAGR), and 248–251 (TKTD).

This sequence belongs to the GTP-binding SRP family. SRP54 subfamily. In terms of assembly, part of the signal recognition particle protein translocation system, which is composed of SRP and FtsY. SRP is a ribonucleoprotein composed of Ffh and a 4.5S RNA molecule.

The protein localises to the cytoplasm. It catalyses the reaction GTP + H2O = GDP + phosphate + H(+). Functionally, involved in targeting and insertion of nascent membrane proteins into the cytoplasmic membrane. Binds to the hydrophobic signal sequence of the ribosome-nascent chain (RNC) as it emerges from the ribosomes. The SRP-RNC complex is then targeted to the cytoplasmic membrane where it interacts with the SRP receptor FtsY. Interaction with FtsY leads to the transfer of the RNC complex to the Sec translocase for insertion into the membrane, the hydrolysis of GTP by both Ffh and FtsY, and the dissociation of the SRP-FtsY complex into the individual components. This Buchnera aphidicola subsp. Schizaphis graminum (strain Sg) protein is Signal recognition particle protein.